The chain runs to 448 residues: Carbon catabolite repressor protein 4 homolog 3 (448 aa).

The segment covering 50–67 (SSTSGPSDSNPESSSNRS) has biased composition (low complexity). The interval 50-92 (SSTSGPSDSNPESSSNRSYSRRWQNPLPRRQHPDQIPSSQIAR) is disordered. E162 contacts Mg(2+).

Belongs to the CCR4/nocturin family. As to quaternary structure, component of the CCR4-NOT complex, at least composed of CRR4 and CAF1 proteins. Mg(2+) serves as cofactor.

It is found in the nucleus. Its subcellular location is the cytoplasm. The enzyme catalyses Exonucleolytic cleavage of poly(A) to 5'-AMP.. Its function is as follows. Acts as a catalytic component of the CCR4-NOT core complex, which in the nucleus seems to be a general transcription factor, and in the cytoplasm the major mRNA deadenylase involved in mRNA turnover. The protein is Carbon catabolite repressor protein 4 homolog 3 (CCR4-3) of Arabidopsis thaliana (Mouse-ear cress).